Reading from the N-terminus, the 74-residue chain is Somatostatin-2 (74 aa).

Residues 1 to 46 (ARGAGLLSQDWSAVEDLLAQMSLPEADAQREAEVVSVATGGRLNLE) constitute a propeptide that is removed on maturation. The cysteines at positions 63 and 74 are disulfide-linked.

It belongs to the somatostatin family.

The protein resides in the secreted. Somatostatin inhibits the release of somatotropin. The chain is Somatostatin-2 (sst2) from Myoxocephalus scorpius (Shorthorn sculpin).